The following is a 487-amino-acid chain: Glutamyl-tRNA(Gln) amidotransferase subunit A (487 aa).

Residues K75 and S150 each act as charge relay system in the active site. The active-site Acyl-ester intermediate is the S174.

It belongs to the amidase family. GatA subfamily. In terms of assembly, heterotrimer of A, B and C subunits.

The catalysed reaction is L-glutamyl-tRNA(Gln) + L-glutamine + ATP + H2O = L-glutaminyl-tRNA(Gln) + L-glutamate + ADP + phosphate + H(+). In terms of biological role, allows the formation of correctly charged Gln-tRNA(Gln) through the transamidation of misacylated Glu-tRNA(Gln) in organisms which lack glutaminyl-tRNA synthetase. The reaction takes place in the presence of glutamine and ATP through an activated gamma-phospho-Glu-tRNA(Gln). This Syntrophomonas wolfei subsp. wolfei (strain DSM 2245B / Goettingen) protein is Glutamyl-tRNA(Gln) amidotransferase subunit A.